The chain runs to 294 residues: 33 kDa chaperonin (294 aa).

2 cysteine pairs are disulfide-bonded: C238–C240 and C271–C274.

Belongs to the HSP33 family. Under oxidizing conditions two disulfide bonds are formed involving the reactive cysteines. Under reducing conditions zinc is bound to the reactive cysteines and the protein is inactive.

It localises to the cytoplasm. Redox regulated molecular chaperone. Protects both thermally unfolding and oxidatively damaged proteins from irreversible aggregation. Plays an important role in the bacterial defense system toward oxidative stress. This Caldanaerobacter subterraneus subsp. tengcongensis (strain DSM 15242 / JCM 11007 / NBRC 100824 / MB4) (Thermoanaerobacter tengcongensis) protein is 33 kDa chaperonin.